Here is a 508-residue protein sequence, read N- to C-terminus: MIYEESKMNLEQERPFVCSAPGCSQRFPTEDHLMIHRHKHEMTLKFPSIKTDNMLSDQTPTPTRFLKNCEEVGLFSELDCSLEHEFRKAQEEESSKRNISMHNAVGGAMTGPGTHQLSSARLPNHDTNVVIQQAMPSPQSSSVITQAPSTNRQIGPVPGSLSSLLHLHNRQRQPMPASMPGTLPNPTMPGSSAVLMPMERQMSVNSSIMGMQGPNLSNPCASPQVQPMHSEAKMRLKAALTHHPAAMSNGNMNTMGHMMEMMGSRQDQTPHHHMHSHPHQHQTLPPHHPYPHQHQHPAHHPHPQPHHQQNHPHHHSHSHLHAHPAHHQTSPHPPLHTGNQAQVSPATQQMQPTQTIQPPQPTGGRRRRVVDEDPDERRRKFLERNRAAATRCRQKRKVWVMSLEKKAEELTQTNMQLQNEVSMLKNEVAQLKQLLLTHKDCPITAMQKESQGYLSPESSPPASPVPACSQQQVIQHNTITTSSSVSEVVGSSTLSQLTTHRTDLNPIL.

The segment at 16–40 (FVCSAPGCSQRFPTEDHLMIHRHKH) adopts a C2H2-type zinc-finger fold. A Glycyl lysine isopeptide (Lys-Gly) (interchain with G-Cter in SUMO2) cross-link involves residue lysine 50. Phosphothreonine occurs at positions 59 and 61. Serine 137 carries the post-translational modification Phosphoserine. The interval 265–391 (RQDQTPHHHM…LERNRAAATR (127 aa)) is disordered. 2 stretches are compositionally biased toward basic residues: residues 271–280 (HHHMHSHPHQ) and 289–326 (PYPHQHQHPAHHPHPQPHHQQNHPHHHSHSHLHAHPAH). The segment covering 337 to 346 (TGNQAQVSPA) has biased composition (polar residues). The segment covering 347-357 (TQQMQPTQTIQ) has biased composition (low complexity). A compositionally biased stretch (basic and acidic residues) spans 369-386 (VVDEDPDERRRKFLERNR). Positions 375–438 (DERRRKFLER…AQLKQLLLTH (64 aa)) constitute a bZIP domain. Positions 377–397 (RRRKFLERNRAAATRCRQKRK) are basic motif. A leucine-zipper region spans residues 403-431 (LEKKAEELTQTNMQLQNEVSMLKNEVAQL). The interval 449–468 (ESQGYLSPESSPPASPVPAC) is disordered.

This sequence belongs to the bZIP family. As to quaternary structure, binds DNA as a homodimer or as a heterodimer with JUN or ATF2/CREBP1.

The protein resides in the nucleus. In terms of biological role, binds to the cAMP response element and activates transcription. The chain is Cyclic AMP-responsive element-binding protein 5 (CREB5) from Homo sapiens (Human).